Reading from the N-terminus, the 336-residue chain is UDP-N-acetylglucosamine--N-acetylmuramyl-(pentapeptide) pyrophosphoryl-undecaprenol N-acetylglucosamine transferase (336 aa).

UDP-N-acetyl-alpha-D-glucosamine-binding positions include 10–12 (TGG), Asn-124, Arg-157, Ser-179, and Gln-277.

Belongs to the glycosyltransferase 28 family. MurG subfamily.

Its subcellular location is the cell inner membrane. The catalysed reaction is di-trans,octa-cis-undecaprenyl diphospho-N-acetyl-alpha-D-muramoyl-L-alanyl-D-glutamyl-meso-2,6-diaminopimeloyl-D-alanyl-D-alanine + UDP-N-acetyl-alpha-D-glucosamine = di-trans,octa-cis-undecaprenyl diphospho-[N-acetyl-alpha-D-glucosaminyl-(1-&gt;4)]-N-acetyl-alpha-D-muramoyl-L-alanyl-D-glutamyl-meso-2,6-diaminopimeloyl-D-alanyl-D-alanine + UDP + H(+). Its pathway is cell wall biogenesis; peptidoglycan biosynthesis. Cell wall formation. Catalyzes the transfer of a GlcNAc subunit on undecaprenyl-pyrophosphoryl-MurNAc-pentapeptide (lipid intermediate I) to form undecaprenyl-pyrophosphoryl-MurNAc-(pentapeptide)GlcNAc (lipid intermediate II). The polypeptide is UDP-N-acetylglucosamine--N-acetylmuramyl-(pentapeptide) pyrophosphoryl-undecaprenol N-acetylglucosamine transferase (Wolinella succinogenes (strain ATCC 29543 / DSM 1740 / CCUG 13145 / JCM 31913 / LMG 7466 / NCTC 11488 / FDC 602W) (Vibrio succinogenes)).